The chain runs to 270 residues: Aquaporin-11 (270 aa).

2 helical membrane-spanning segments follow: residues Ile5–Cys25 and Phe59–Phe79. Positions Asp94 to Ser96 match the NPA 1 motif. The helical transmembrane segment at Ile120–Ala140 threads the bilayer. Asn148 carries N-linked (GlcNAc...) asparagine glycosylation. 2 helical membrane passes run Ala153–Asn173 and Met184–Gly204. The NPA 2 motif lies at Asn207–Thr209. Residues Gly220–Ile240 traverse the membrane as a helical segment.

Belongs to the MIP/aquaporin (TC 1.A.8) family.

It localises to the membrane. The enzyme catalyses H2O(in) = H2O(out). Functionally, probable intracellular unorthodox aquaporin that may modulate the water content and osmolytes during anhydrobiosis. The protein is Aquaporin-11 of Milnesium tardigradum (Water bear).